The primary structure comprises 823 residues: Polyadenylation and cleavage factor homolog 11 (823 aa).

Residues 3-135 form the CID domain; that stretch reads SVESAARDYR…ELDMKINKLD (133 aa). 5 disordered regions span residues 142–176, 188–301, 340–395, 570–643, and 728–755; these read NPQT…STST, SSTP…KTLK, SSAP…LPAP, LPAP…EKRS, and WLTP…VASS. Polar residues-rich tracts occupy residues 157–176 and 188–198; these read APSQ…STST and SSTPGAASASK. Basic and acidic residues predominate over residues 200 to 226; it reads VVEKTKSPGTVNKEKQVKKEPKQDPLD. 2 stretches are compositionally biased toward low complexity: residues 227-242 and 342-353; these read KLLP…SSPA and APPFQHPQQHHP. The segment covering 374 to 390 has biased composition (pro residues); that stretch reads PQDPAPIVPVQAPPPQQ. The span at 571 to 581 shows a compositional bias: low complexity; the sequence is PAPARSPSSPR. Over residues 609-624 the composition is skewed to polar residues; it reads QPQQNARWGGANKQQN.

The polypeptide is Polyadenylation and cleavage factor homolog 11 (pcf-11) (Caenorhabditis elegans).